Reading from the N-terminus, the 302-residue chain is ATP synthase gamma chain (302 aa).

It belongs to the ATPase gamma chain family. F-type ATPases have 2 components, CF(1) - the catalytic core - and CF(0) - the membrane proton channel. CF(1) has five subunits: alpha(3), beta(3), gamma(1), delta(1), epsilon(1). CF(0) has three main subunits: a, b and c.

The protein resides in the cell membrane. In terms of biological role, produces ATP from ADP in the presence of a proton gradient across the membrane. The gamma chain is believed to be important in regulating ATPase activity and the flow of protons through the CF(0) complex. In Leuconostoc citreum (strain KM20), this protein is ATP synthase gamma chain.